The chain runs to 2748 residues: Nuclear migration protein NUM1 (2748 aa).

A compositionally biased stretch (basic residues) spans 1–10 (MSHNNRHKKN). 2 disordered regions span residues 1–36 (MSHNNRHKKNNDKDSSAGQYANSIDNSLSQESVSTN) and 290–312 (YYQKQHTSDTTVTSDPDSEGTTS). Positions 17–36 (AGQYANSIDNSLSQESVSTN) are enriched in polar residues. Residues 293–304 (KQHTSDTTVTSD) show a composition bias toward low complexity. A run of 12 repeats spans residues 593–656 (PSLE…KLEQ), 657–727 (PSLE…EVEQ), 728–798 (PSLA…EVEQ), 799–862 (PSLA…KLEQ), 863–926 (PSLA…KLEQ), 927–990 (PSLA…KLEQ), 991–1054 (PSLE…KLEQ), 1055–1118 (PSLE…KLEQ), 1119–1182 (PSLE…KLEQ), 1183–1246 (PSLA…KLEQ), 1247–1310 (PSLA…KLEQ), and 1311–1374 (PSLE…KLEQ). Residues 593–1384 (PSLEYLVEHA…PSLEYLVKHA (792 aa)) form a 13 X tandem repeats region. 3 positions are modified to phosphoserine: S611, S675, and S746. Phosphoserine is present on residues S881, S945, and S1009. A phosphoserine mark is found at S1201, S1265, and S1329. The stretch at 1375-1384 (PSLEYLVKHA) is one 13; truncated repeat. The tract at residues 2111–2133 (ERAERIDEQSINTTSSNSTTTSS) is disordered. Low complexity predominate over residues 2122-2133 (NTTSSNSTTTSS). A phosphoserine mark is found at S2162, S2164, S2197, S2217, S2220, S2221, S2360, and S2424. The span at 2444–2460 (KEDKKGQATASKHEYVS) shows a compositional bias: basic and acidic residues. The disordered stretch occupies residues 2444 to 2536 (KEDKKGQATA…HSSRNTPASR (93 aa)). Residues 2465–2474 (NKTSTVSTKS) are compositionally biased toward polar residues. Residues 2492 to 2503 (SESHPQIEEQSH) are compositionally biased toward basic and acidic residues. Phosphoserine is present on S2494. Residues 2504–2514 (RTNHHKHHKRQ) are compositionally biased toward basic residues. Positions 2516-2532 (SLNSNSTSKTTHSSRNT) are enriched in low complexity. At S2545 the chain carries Phosphoserine. In terms of domain architecture, PH spans 2573–2683 (QTVIGEYLFK…WYNSLRYLLQ (111 aa)). Positions 2707–2748 (IFPLPGENTKSSSKRLSASRRSVSTRSLRHRVPQSRSFGNLR) are disordered. Residues 2720–2730 (KRLSASRRSVS) are compositionally biased toward low complexity.

As to quaternary structure, interacts with PAC11 when DYN1 is present, and TUB3.

It is found in the bud tip. Its function is as follows. Controls nuclear migration. NUM1 specifically controls the interaction of the bud neck cytoskeleton with the pre-divisional G2 nucleus. Functions in dynein-anchoring. During late anaphase forms dynein-interacting cortical microtubule capture sites at both cellular poles. This leads to dynein-dependent sliding of the microtubules in the bud. This is Nuclear migration protein NUM1 (NUM1) from Saccharomyces cerevisiae (strain ATCC 204508 / S288c) (Baker's yeast).